The following is a 117-amino-acid chain: SPbeta prophage-derived uncharacterized protein YosL (117 aa).

The polypeptide is SPbeta prophage-derived uncharacterized protein YosL (yosL) (Bacillus subtilis (strain 168)).